We begin with the raw amino-acid sequence, 473 residues long: Photosystem II CP43 reaction center protein (473 aa).

Positions 1 to 14 (MKTLYSLRRFYHVE) are excised as a propeptide. Threonine 15 bears the N-acetylthreonine mark. Threonine 15 carries the post-translational modification Phosphothreonine. Helical transmembrane passes span 69-93 (LFEV…PHLA), 134-155 (LLGP…KDRN), 178-200 (KALF…RKIT), 255-275 (KPFA…LSYS), and 291-312 (WFNN…ASQA). [CaMn4O5] cluster is bound at residue glutamate 367. Residues 447 to 471 (RARAAAAGFEKGIDRDFEPVLSMTP) traverse the membrane as a helical segment.

This sequence belongs to the PsbB/PsbC family. PsbC subfamily. As to quaternary structure, PSII is composed of 1 copy each of membrane proteins PsbA, PsbB, PsbC, PsbD, PsbE, PsbF, PsbH, PsbI, PsbJ, PsbK, PsbL, PsbM, PsbT, PsbX, PsbY, PsbZ, Psb30/Ycf12, at least 3 peripheral proteins of the oxygen-evolving complex and a large number of cofactors. It forms dimeric complexes. It depends on Binds multiple chlorophylls and provides some of the ligands for the Ca-4Mn-5O cluster of the oxygen-evolving complex. It may also provide a ligand for a Cl- that is required for oxygen evolution. PSII binds additional chlorophylls, carotenoids and specific lipids. as a cofactor.

Its subcellular location is the plastid. It localises to the chloroplast thylakoid membrane. In terms of biological role, one of the components of the core complex of photosystem II (PSII). It binds chlorophyll and helps catalyze the primary light-induced photochemical processes of PSII. PSII is a light-driven water:plastoquinone oxidoreductase, using light energy to abstract electrons from H(2)O, generating O(2) and a proton gradient subsequently used for ATP formation. The protein is Photosystem II CP43 reaction center protein of Fagopyrum esculentum subsp. ancestrale (Wild buckwheat).